We begin with the raw amino-acid sequence, 107 residues long: uncharacterized protein (107 aa).

This is an uncharacterized protein from Methanocaldococcus jannaschii (strain ATCC 43067 / DSM 2661 / JAL-1 / JCM 10045 / NBRC 100440) (Methanococcus jannaschii).